Reading from the N-terminus, the 198-residue chain is SOSS complex subunit B2 (198 aa).

The OB DNA-binding region spans 26 to 89 (IVLEIGRVTK…SMWKGCLTLY (64 aa)). The interval 114–198 (EPNPDYRGQQ…ARDPRRAFKR (85 aa)) is disordered. Polar residues-rich tracts occupy residues 136–151 (STNT…QTGP) and 173–188 (LPGT…TISN).

This sequence belongs to the SOSS-B family. SOSS-B2 subfamily. Component of the SOSS complex, composed of SOSS-B (SOSS-B1/NABP2 or SOSS-B2/NABP1), SOSS-A/INTS3 and SOSS-C/INIP. SOSS complexes containing SOSS-B1/NABP2 are more abundant than complexes containing SOSS-B2/NABP1. In terms of tissue distribution, ubiquitous with high expression in the thymus.

It is found in the nucleus. Component of the SOSS complex, a multiprotein complex that functions downstream of the MRN complex to promote DNA repair and G2/M checkpoint. In the SOSS complex, acts as a sensor of single-stranded DNA that binds to single-stranded DNA, in particular to polypyrimidines. The SOSS complex associates with DNA lesions and influences diverse endpoints in the cellular DNA damage response including cell-cycle checkpoint activation, recombinational repair and maintenance of genomic stability. Required for efficient homologous recombination-dependent repair of double-strand breaks (DSBs) and ATM-dependent signaling pathways. The chain is SOSS complex subunit B2 (Nabp1) from Mus musculus (Mouse).